The following is a 505-amino-acid chain: Beta-agarase (505 aa).

The N-terminal stretch at 1-23 (MLKVIPWLLVTSSLVAIPTYIHA) is a signal peptide. Catalysis depends on E200, which acts as the Proton donor. E322 acts as the Nucleophile in catalysis.

The protein belongs to the glycosyl hydrolase 86 family.

It localises to the secreted. It carries out the reaction Hydrolysis of (1-&gt;4)-beta-D-galactosidic linkages in agarose, giving the tetramer as the predominant product.. In terms of biological role, hydrolase that cleaves agar at the (1-&gt;4) linkage, producing tetrameric saccharide molecules. Is specific for agar and agarose and does not digest alginate or carrageenan. This chain is Beta-agarase, found in Pseudoalteromonas atlantica (Alteromonas atlantica).